The sequence spans 179 residues: ATP-dependent protease subunit HslV (179 aa).

Thr-8 is a catalytic residue. Gly-163, Cys-166, and Thr-169 together coordinate Na(+).

The protein belongs to the peptidase T1B family. HslV subfamily. In terms of assembly, a double ring-shaped homohexamer of HslV is capped on each side by a ring-shaped HslU homohexamer. The assembly of the HslU/HslV complex is dependent on binding of ATP.

Its subcellular location is the cytoplasm. It catalyses the reaction ATP-dependent cleavage of peptide bonds with broad specificity.. Allosterically activated by HslU binding. Functionally, protease subunit of a proteasome-like degradation complex believed to be a general protein degrading machinery. The chain is ATP-dependent protease subunit HslV from Solibacter usitatus (strain Ellin6076).